The sequence spans 434 residues: MKTYRSESLFAEARSLFPGGVNSPVRAFRAVGGAPRFIARGEGAFLVDVDGNRYIDYVLSWGPLILGHAHPNVVAAIAEQAAHGTSFGAPTELESELARLITQAMPSVEMVRFVSSGTEAAMSALRLARAATRRDKVIKFAGCYHGHFDGFLVQAGSGVATLGLPDSPGVTAATAASTLTAPYNDLDAVESLLKANPGEVAAIAVEPVAGNMGLVLPQPGFLEGLRRLADEHGALLIFDEVMTGFRVGYGGAQGKYGITPDLTCLGKVIGGGLPAAAYGGRRDLMELIAPAGPVYQAGTLSGNPLAMAAGAATLRAIRAPGVFEQLERAAAMLCSGFEHAAAEADIALRTAYAGSMWGFFFTDEPVVDYVSAKKSDTQRYAQFFHAMLERGIYLAPAQFEASFVSLAHSDALIQETIAAAADALRSIQNAARKG.

An N6-(pyridoxal phosphate)lysine modification is found at Lys267.

It belongs to the class-III pyridoxal-phosphate-dependent aminotransferase family. HemL subfamily. As to quaternary structure, homodimer. Pyridoxal 5'-phosphate serves as cofactor.

It localises to the cytoplasm. It catalyses the reaction (S)-4-amino-5-oxopentanoate = 5-aminolevulinate. The protein operates within porphyrin-containing compound metabolism; protoporphyrin-IX biosynthesis; 5-aminolevulinate from L-glutamyl-tRNA(Glu): step 2/2. Its pathway is porphyrin-containing compound metabolism; chlorophyll biosynthesis. This chain is Glutamate-1-semialdehyde 2,1-aminomutase, found in Roseiflexus castenholzii (strain DSM 13941 / HLO8).